Here is a 364-residue protein sequence, read N- to C-terminus: MQERHTEQDYRALLIADTPIIDVRAPIEFEQGAMPAAINLPLMNNDERAAVGICYKQQGSDAALALGHKLVAGEIRQQRIDAWRAACLQNPHGILCCARGGQRSHIVQRWLHDAGIDYPLVEGGYKALRQTAIQATIELSQKPIVLIGGCTGCGKTLLVQQQPNGVDLEGLARHRGSAFGRTLQPQLSQASFENLLAAEMLKTDAHQDLRLWVLEDESRMIGSNHLPECLRERMTQATIAVVEDPFEIRLERLNEEYFLRMHHDFTHAYGDEQGWQEYCEYLHHGLSAIKRRLGLQRYNELAARLDAALTTQLTTGSTDGHLAWLVPLLEEYYDPMYRYQLEKKAEKVVFRGEWAEVAEWVKAQ.

The Rhodanese domain occupies 14–137 (LIADTPIIDV…LRQTAIQATI (124 aa)). Catalysis depends on C97, which acts as the S-selanylcysteine intermediate.

It belongs to the SelU family. Monomer.

It carries out the reaction 5-methylaminomethyl-2-thiouridine(34) in tRNA + selenophosphate + (2E)-geranyl diphosphate + H2O + H(+) = 5-methylaminomethyl-2-selenouridine(34) in tRNA + (2E)-thiogeraniol + phosphate + diphosphate. It catalyses the reaction 5-methylaminomethyl-2-thiouridine(34) in tRNA + (2E)-geranyl diphosphate = 5-methylaminomethyl-S-(2E)-geranyl-thiouridine(34) in tRNA + diphosphate. The catalysed reaction is 5-methylaminomethyl-S-(2E)-geranyl-thiouridine(34) in tRNA + selenophosphate + H(+) = 5-methylaminomethyl-2-(Se-phospho)selenouridine(34) in tRNA + (2E)-thiogeraniol. The enzyme catalyses 5-methylaminomethyl-2-(Se-phospho)selenouridine(34) in tRNA + H2O = 5-methylaminomethyl-2-selenouridine(34) in tRNA + phosphate. In terms of biological role, involved in the post-transcriptional modification of the uridine at the wobble position (U34) of tRNA(Lys), tRNA(Glu) and tRNA(Gln). Catalyzes the conversion of 2-thiouridine (S2U-RNA) to 2-selenouridine (Se2U-RNA). Acts in a two-step process involving geranylation of 2-thiouridine (S2U) to S-geranyl-2-thiouridine (geS2U) and subsequent selenation of the latter derivative to 2-selenouridine (Se2U) in the tRNA chain. The polypeptide is tRNA 2-selenouridine synthase (Escherichia coli O6:K15:H31 (strain 536 / UPEC)).